Consider the following 138-residue polypeptide: MIYWLFLAMAIITEVIGTLSMKHASVSGGVVGMAVMYIMIATSYILLAMAVKKVALGVAYALWEGVGILFITVFSVMWFDESLSLMKVGGLALLITGIMLIKSGTRKAAVKKSAEVVKQMANKAVSVATTKSSKIKEA.

4 helical membrane-spanning segments follow: residues 1 to 21 (MIYW…TLSM), 30 to 50 (VVGM…LAMA), 54 to 74 (VALG…ITVF), and 81 to 101 (ESLS…IMLI).

It belongs to the drug/metabolite transporter (DMT) superfamily. Small multidrug resistance (SMR) (TC 2.A.7.1) family. MdtJ subfamily. As to quaternary structure, forms a complex with MdtI.

It localises to the cell inner membrane. Its function is as follows. Catalyzes the excretion of spermidine. This Photorhabdus laumondii subsp. laumondii (strain DSM 15139 / CIP 105565 / TT01) (Photorhabdus luminescens subsp. laumondii) protein is Spermidine export protein MdtJ.